The primary structure comprises 204 residues: MAEQEPTAEQLAQIAAENEEDEHSVNYKPPAQKSIQEIQELDKDDESLRKYKEALLGRVAVSADPNVPNVVVTRLTLVCSTAPGPLELDLTGDLESFKKQSFVLKEGVEYRIKISFRVNREIVSGMKYIQHTYRKGVKIDKTDYMVGSYGPRAEEYEFLTPMEEAPKGMLARGSYNIKSRFTDDDRTDHLSWEWNLTIKKEWKD.

Positions 1–36 are disordered; that stretch reads MAEQEPTAEQLAQIAAENEEDEHSVNYKPPAQKSIQ. At Ala2 the chain carries N-acetylalanine. Ser34 is subject to Phosphoserine. Lys43 bears the N6-acetyllysine mark. Ser47 is subject to Phosphoserine. The hydrophobic stretch occupies residues 66 to 83; it reads NVPNVVVTRLTLVCSTAP. At Ser101 the chain carries Phosphoserine; by PKA. Lys105 is modified (N6-acetyllysine). Ser115 is modified (phosphoserine; by PKC). Lys127 carries the N6-acetyllysine modification. Glycyl lysine isopeptide (Lys-Gly) (interchain with G-Cter in SUMO1); alternate cross-links involve residues Lys138 and Lys141. Residues Lys138 and Lys141 each participate in a glycyl lysine isopeptide (Lys-Gly) (interchain with G-Cter in SUMO2); alternate cross-link. Lys141 is modified (N6-acetyllysine; alternate). Lys141 bears the N6-succinyllysine; alternate mark. An N6-acetyllysine modification is found at Lys178.

The protein belongs to the Rho GDI family. Monomer. Interacts with FER. Interacts with PLXNB3. Forms a heterodimer with RAC1. Interacts with RHOA, the affinity is increased by three orders of magnitude when RHOA is prenylated. Interacts with PSMD10; the interaction increases ARHGDIA association with RHOA, leading to ARHGDIA-mediated inactivation of RHOA and ROCK and prolonged AKT activation. Interacts with KANK2; the interaction is direct and may regulate the interaction of ARHGDIA with RHOA, RAC1 and CDC42. Interacts with RHOC. Interacts with CDC42. Interacts with NGFR (via death domain); NGFR binding decreases the affinity for RHOA. As to expression, brain, lung, thymus, spleen, small intestine, and kidney, and weakly in heart and liver.

Its subcellular location is the cytoplasm. Its function is as follows. Controls Rho proteins homeostasis. Regulates the GDP/GTP exchange reaction of the Rho proteins by inhibiting the dissociation of GDP from them, and the subsequent binding of GTP to them. Retains Rho proteins such as CDC42, RAC1 and RHOA in an inactive cytosolic pool, regulating their stability and protecting them from degradation. Actively involved in the recycling and distribution of activated Rho GTPases in the cell, mediates extraction from membranes of both inactive and activated molecules due its exceptionally high affinity for prenylated forms. Through the modulation of Rho proteins, may play a role in cell motility regulation. In glioma cells, inhibits cell migration and invasion by mediating the signals of SEMA5A and PLXNB3 that lead to inactivation of RAC1. The chain is Rho GDP-dissociation inhibitor 1 (ARHGDIA) from Bos taurus (Bovine).